The primary structure comprises 508 residues: Putative adenosylhomocysteinase 3 (508 aa).

Residue Ser4 is modified to Phosphoserine. The interval 24–81 (DQKQEFNKRPTKIGRRSLSRSISQSSTDSYSSAASYTDSSDDETSPRDKQQKNSKGSS) is disordered. Residues 32–41 (RPTKIGRRSL) show a composition bias toward basic residues. Over residues 42-61 (SRSISQSSTDSYSSAASYTD) the composition is skewed to low complexity. Residues Ser46, Ser49, Ser52, and Ser55 each carry the phosphoserine modification. Positions 133, 207, and 232 each coordinate substrate. An NAD(+)-binding site is contributed by 233–235 (SVT). Residues Lys262 and Asp266 each contribute to the substrate site. NAD(+)-binding positions include Asn267, 298–303 (GEVGKG), Glu319, Asn354, 375–377 (IGH), and Asn422.

This sequence belongs to the adenosylhomocysteinase family. Homotetramer. Forms heteromultimers with AHCYL1 (via the C-terminal region). Interacts with ITPR1; with lower affinity than AHCYL1 and maybe via ITPR1. Interacts with SLC4A4. Interacts with ZCCHC4. Requires NAD(+) as cofactor.

Its subcellular location is the cytoplasm. It is found in the microsome. The catalysed reaction is S-adenosyl-L-homocysteine + H2O = L-homocysteine + adenosine. It participates in amino-acid biosynthesis; L-homocysteine biosynthesis; L-homocysteine from S-adenosyl-L-homocysteine: step 1/1. Its function is as follows. May regulate the electrogenic sodium/bicarbonate cotransporter SLC4A4 activity and Mg(2+)-sensitivity. On the contrary of its homolog AHCYL1, does not regulate ITPR1 sensitivity to inositol 1,4,5-trisphosphate. The polypeptide is Putative adenosylhomocysteinase 3 (AHCYL2) (Pongo abelii (Sumatran orangutan)).